The following is a 70-amino-acid chain: SPbeta prophage-derived uncharacterized HTH-type transcriptional regulator YopO (70 aa).

Residues 5-59 (IKQLMVKRGITIEELSRETMIDMQTLNKIIEMPDESDVTTIKLIALVLNVSIDEL) form the HTH cro/C1-type domain. The segment at residues 16 to 35 (IEELSRETMIDMQTLNKIIE) is a DNA-binding region (H-T-H motif).

The chain is SPbeta prophage-derived uncharacterized HTH-type transcriptional regulator YopO (yopO) from Bacillus subtilis (strain 168).